The chain runs to 424 residues: GTPase Obg (424 aa).

The Obg domain occupies 1-158 (MFYDQAKIYV…RNLLLELKLL (158 aa)). One can recognise an OBG-type G domain in the interval 159-329 (ADVGLVGFPN…LVYAAAKALP (171 aa)). GTP contacts are provided by residues 165-172 (GFPNVGKS), 190-194 (FTTLV), 212-215 (DIPG), 282-285 (NKMD), and 310-312 (SAA). The Mg(2+) site is built by Ser-172 and Thr-192. The 78-residue stretch at 347 to 424 (TQASAPHRFE…IAGIEFEWEE (78 aa)) folds into the OCT domain.

This sequence belongs to the TRAFAC class OBG-HflX-like GTPase superfamily. OBG GTPase family. As to quaternary structure, monomer. Mg(2+) is required as a cofactor.

It is found in the cytoplasm. Its function is as follows. An essential GTPase which binds GTP, GDP and possibly (p)ppGpp with moderate affinity, with high nucleotide exchange rates and a fairly low GTP hydrolysis rate. Plays a role in control of the cell cycle, stress response, ribosome biogenesis and in those bacteria that undergo differentiation, in morphogenesis control. The chain is GTPase Obg from Desulfitobacterium hafniense (strain DSM 10664 / DCB-2).